An 864-amino-acid polypeptide reads, in one-letter code: MLGNLKKIFDKNEIEIRKARKIVERINQLDEKARKTSFEEMKSYILQYKGKLENIEELDEHLEQVFAYVRETARRTVGMRHFDVQLIGGIVLHKGKIAEMKTGEGKTLVATAPIVLNSLMNRNIHVVTVNDYLAKRDAMWMGPIYLALGLRVGIINTTGKAYEVVWKNPELAEKGLKENYCVWPDDYDGEFLSDEMKVKKAVEAFEVDIIEVSKKEAYRCDVTYGTNSEFGFDYLRDNLVVSLDDKVQMGHFYAIVDEVDSILIDEARTPLIISGPSKNNASVYKHFYQIAKRLEKDKHFKVDEEHRTVLLTDEGIEYLEKLLGVDNLYDPANVNSIYHITNSLKAIHLFKKDVDYIVHNGQVLIVDEFTGRVLPGRRYSGGLHQAIEAKEGVPIKEESITYATITYQNYFRMYEKLAGMTGTAKTEEQEFKAIYGMDVVVIPTHKPMIRIDHDDLIYRSVEEKYKAIVEEIKKRHEKGQPVLVGTTSIEKSEKLSEMLKKEGIPHQVLNAKYHEKEAQIVAQAGQKGMVTIATNMAGRGTDIKLGPGVKELGGLLIIGTERHESRRIDNQLRGRSGRQGDPGESIFFLSVEDDLMRIFGGDRIQKVMDMVKIEPGQPIYHPLLTKLIEQVQKKVEGINFSVRKYLLELDSVLDTQRRAIYGYRDNILERDVDDFISEAIDNFVEARIEEFCSGVEWDWEGLKNSFAVIKDFVKIDTKIDDKEKLKQDIIEQITKAYRLKKEEFGEDFEHVAKFIVLRIIDENWRQYLEEVEHVKESIRLRSYGQKDPVLEFKKETYDMFNDMMMRTYELSVSYLLNLRRVDNKAEEESKKELAKVSTVHDEFRLIAEESKDSDKKKPKLKIKR.

ATP contacts are provided by residues Gln-85, 103–107 (GEGKT), and Asp-542.

The protein belongs to the SecA family. Monomer and homodimer. Part of the essential Sec protein translocation apparatus which comprises SecA, SecYEG and auxiliary proteins SecDF. Other proteins may also be involved.

Its subcellular location is the cell inner membrane. It is found in the cytoplasm. It catalyses the reaction ATP + H2O + cellular proteinSide 1 = ADP + phosphate + cellular proteinSide 2.. Its function is as follows. Part of the Sec protein translocase complex. Interacts with the SecYEG preprotein conducting channel. Has a central role in coupling the hydrolysis of ATP to the transfer of proteins into and across the cell membrane, serving as an ATP-driven molecular motor driving the stepwise translocation of polypeptide chains across the membrane. The sequence is that of Protein translocase subunit SecA from Fervidobacterium nodosum (strain ATCC 35602 / DSM 5306 / Rt17-B1).